The sequence spans 685 residues: A-type ATP synthase subunit I (685 aa).

7 helical membrane passes run 172 to 192, 348 to 368, 394 to 414, 464 to 484, 538 to 558, 604 to 624, and 626 to 646; these read VGGL…VAVP, EIVP…LMFP, VIAV…EVFG, LFMG…NGVI, LVLA…PIIY, MFVI…ADVV, and ALLY…LAFA.

It belongs to the V-ATPase 116 kDa subunit family. In terms of assembly, has multiple subunits with at least A(3), B(3), C, D, E, F, H, I and proteolipid K(x).

The protein resides in the cell membrane. Its function is as follows. Component of the A-type ATP synthase that produces ATP from ADP in the presence of a proton gradient across the membrane. The polypeptide is A-type ATP synthase subunit I (Aeropyrum pernix (strain ATCC 700893 / DSM 11879 / JCM 9820 / NBRC 100138 / K1)).